The sequence spans 334 residues: Holliday junction branch migration complex subunit RuvB (334 aa).

Positions Ala-4–Tyr-184 are large ATPase domain (RuvB-L). Residues Arg-24, Gly-65, Lys-68, Thr-69, Thr-70, Glu-131–Tyr-133, Arg-174, Tyr-184, and Arg-221 contribute to the ATP site. Residue Thr-69 participates in Mg(2+) binding. The segment at Asn-185 to Asp-255 is small ATPAse domain (RuvB-S). Residues Ser-258 to Asp-334 are head domain (RuvB-H). DNA contacts are provided by Arg-294, Arg-313, and Arg-318.

Belongs to the RuvB family. In terms of assembly, homohexamer. Forms an RuvA(8)-RuvB(12)-Holliday junction (HJ) complex. HJ DNA is sandwiched between 2 RuvA tetramers; dsDNA enters through RuvA and exits via RuvB. An RuvB hexamer assembles on each DNA strand where it exits the tetramer. Each RuvB hexamer is contacted by two RuvA subunits (via domain III) on 2 adjacent RuvB subunits; this complex drives branch migration. In the full resolvosome a probable DNA-RuvA(4)-RuvB(12)-RuvC(2) complex forms which resolves the HJ.

Its subcellular location is the cytoplasm. The enzyme catalyses ATP + H2O = ADP + phosphate + H(+). In terms of biological role, the RuvA-RuvB-RuvC complex processes Holliday junction (HJ) DNA during genetic recombination and DNA repair, while the RuvA-RuvB complex plays an important role in the rescue of blocked DNA replication forks via replication fork reversal (RFR). RuvA specifically binds to HJ cruciform DNA, conferring on it an open structure. The RuvB hexamer acts as an ATP-dependent pump, pulling dsDNA into and through the RuvAB complex. RuvB forms 2 homohexamers on either side of HJ DNA bound by 1 or 2 RuvA tetramers; 4 subunits per hexamer contact DNA at a time. Coordinated motions by a converter formed by DNA-disengaged RuvB subunits stimulates ATP hydrolysis and nucleotide exchange. Immobilization of the converter enables RuvB to convert the ATP-contained energy into a lever motion, pulling 2 nucleotides of DNA out of the RuvA tetramer per ATP hydrolyzed, thus driving DNA branch migration. The RuvB motors rotate together with the DNA substrate, which together with the progressing nucleotide cycle form the mechanistic basis for DNA recombination by continuous HJ branch migration. Branch migration allows RuvC to scan DNA until it finds its consensus sequence, where it cleaves and resolves cruciform DNA. The polypeptide is Holliday junction branch migration complex subunit RuvB (Shewanella amazonensis (strain ATCC BAA-1098 / SB2B)).